We begin with the raw amino-acid sequence, 213 residues long: Phosphatidylserine decarboxylase proenzyme (213 aa).

Residue Ser183 is the Schiff-base intermediate with substrate; via pyruvic acid of the active site. Residue Ser183 is modified to Pyruvic acid (Ser); by autocatalysis.

It belongs to the phosphatidylserine decarboxylase family. PSD-A subfamily. In terms of assembly, heterodimer of a large membrane-associated beta subunit and a small pyruvoyl-containing alpha subunit. It depends on pyruvate as a cofactor. In terms of processing, is synthesized initially as an inactive proenzyme. Formation of the active enzyme involves a self-maturation process in which the active site pyruvoyl group is generated from an internal serine residue via an autocatalytic post-translational modification. Two non-identical subunits are generated from the proenzyme in this reaction, and the pyruvate is formed at the N-terminus of the alpha chain, which is derived from the carboxyl end of the proenzyme. The post-translation cleavage follows an unusual pathway, termed non-hydrolytic serinolysis, in which the side chain hydroxyl group of the serine supplies its oxygen atom to form the C-terminus of the beta chain, while the remainder of the serine residue undergoes an oxidative deamination to produce ammonia and the pyruvoyl prosthetic group on the alpha chain.

The protein resides in the cell membrane. The enzyme catalyses a 1,2-diacyl-sn-glycero-3-phospho-L-serine + H(+) = a 1,2-diacyl-sn-glycero-3-phosphoethanolamine + CO2. The protein operates within phospholipid metabolism; phosphatidylethanolamine biosynthesis; phosphatidylethanolamine from CDP-diacylglycerol: step 2/2. Its function is as follows. Catalyzes the formation of phosphatidylethanolamine (PtdEtn) from phosphatidylserine (PtdSer). The sequence is that of Phosphatidylserine decarboxylase proenzyme from Syntrophus aciditrophicus (strain SB).